A 596-amino-acid polypeptide reads, in one-letter code: Ran GTPase-activating protein (596 aa).

LRR repeat units follow at residues 44-71, 107-134, 137-164, 203-230, 231-258, and 259-286; these read QTTVHYLNLDGNTLGVEAAKAIGEGLKR, GAKLTVLDLSDNALGPNGMRGLEELLRS, CYSLQELLLCNCGLGPEGGSMLSRALID, LKTFEEIVLEQNSIYIEGVEALAESFKH, NPHLRVLNMNDNTLKSEGAEKIAEALPF, and LPLLREMSFGDCLIKTNGAYHFGEALER. The interval 355–418 is disordered; sequence HQEEEDLEDE…EYSNVAEETA (64 aa). Residues 387 to 410 are compositionally biased toward acidic residues; it reads TTEEADEDSEGDEDDEEDEGDEEY. 2 positions are modified to phosphothreonine: Thr-433 and Thr-434. Ser-436 carries the post-translational modification Phosphoserine.

Belongs to the RNA1 family. In terms of assembly, forms a complex with Nup358/RanBP2, sbr/Nxf1 and Nxt1. Associates with the nuclear pore complex via its interaction with Nup358/RanBP2. As to expression, both full-length and truncated protein are expressed in testis (at protein level). Expressed in oocytes and nurse cells (at protein level).

The protein resides in the cytoplasm. It is found in the nucleus membrane. Functionally, GTPase activator for the nuclear Ras-related regulatory protein Ran, converting it to the putatively inactive GDP-bound state. Trans-acting factor necessary for meiotic distortion. Distortion is only seen in individuals that carry the RanGAP tandem duplication and express a RanGAP truncated protein. Binding of truncated RanGAP product to the Responder(RSP) locus initiates events that lead to sperm dysfunction. During oogenesis, plays a role in the biogenesis of annulate lamellae containing nuclear pore complex components. The chain is Ran GTPase-activating protein (RanGAP) from Drosophila melanogaster (Fruit fly).